The sequence spans 186 residues: Biofilm operon icaADBC HTH-type negative transcriptional regulator IcaR (186 aa).

The 59-residue stretch at 1–59 (MKDKIIDNAITLFSEKGYDGTTLDDIAKSVNIKKASLYYHFDSKKSIYEQSVKCCFDYL) folds into the HTH tetR-type domain. Residues 22 to 41 (TLDDIAKSVNIKKASLYYHF) constitute a DNA-binding region (H-T-H motif).

As to quaternary structure, homodimer.

In terms of biological role, represses transcription of the icaADBC operon necessary for biofilm production. This is Biofilm operon icaADBC HTH-type negative transcriptional regulator IcaR (icaR) from Staphylococcus aureus (strain NCTC 8325 / PS 47).